The chain runs to 1234 residues: DNA-directed RNA polymerase I subunit RPA2 (1234 aa).

The C4-type zinc finger occupies Cys-1119–Cys-1150.

Belongs to the RNA polymerase beta chain family. In terms of assembly, component of the RNA polymerase I (Pol I) complex consisting of 14 subunits.

It is found in the nucleus. Its subcellular location is the nucleolus. It catalyses the reaction RNA(n) + a ribonucleoside 5'-triphosphate = RNA(n+1) + diphosphate. In terms of biological role, DNA-dependent RNA polymerase catalyzes the transcription of DNA into RNA using the four ribonucleoside triphosphates as substrates. Second largest core component of RNA polymerase I which synthesizes ribosomal RNA precursors. Proposed to contribute to the polymerase catalytic activity and forms the polymerase active center together with the largest subunit. Pol I is composed of mobile elements and RPA2 is part of the core element with the central large cleft and probably a clamp element that moves to open and close the cleft. This Neurospora crassa (strain ATCC 24698 / 74-OR23-1A / CBS 708.71 / DSM 1257 / FGSC 987) protein is DNA-directed RNA polymerase I subunit RPA2 (acr-2).